The chain runs to 433 residues: Transcobalamin-1 (433 aa).

Residues Met1 to Cys23 form the signal peptide. The tract at residues Glu24–Ser310 is globular N-terminal alpha domain. Disulfide bonds link Cys26–Cys265, Cys105–Cys308, and Cys155–Cys197. Thr142 to Gln146 is a binding site for cyanocob(III)alamin. Asn160 carries N-linked (GlcNAc...) asparagine glycosylation. Cyanocob(III)alamin is bound at residue Asp186. N-linked (GlcNAc...) asparagine glycosylation is present at Asn216. Residues Asn240 and Gln289 each contribute to the cyanocob(III)alamin site. The tract at residues Ala311 to Ser332 is flexible linker. 6 N-linked (GlcNAc...) asparagine glycosylation sites follow: Asn316, Asn337, Asn343, Asn349, Asn354, and Asn369. A globular C-terminal beta domain region spans residues Tyr333–Tyr433. Tyr385–Ile386 is a cyanocob(III)alamin binding site. Cysteines 388 and 393 form a disulfide. Cyanocob(III)alamin contacts are provided by residues Trp402–Leu404, Leu411, and Tyr433.

Belongs to the eukaryotic cobalamin transport proteins family. In terms of processing, contains about 30% carbohydrates. As to expression, produced by the salivary glands of the oral cavity, in response to ingestion of food. Major constituent of secondary granules in neutrophils.

It localises to the secreted. Its function is as follows. Binds vitamin B12 with femtomolar affinity and protects it from the acidic environment of the stomach. This is Transcobalamin-1 (TCN1) from Homo sapiens (Human).